Consider the following 421-residue polypeptide: Subtilisin-like protease 2 (421 aa).

The signal sequence occupies residues 1–16 (MQLLNFGLLLLPFVAG). Residues 17–122 (DLAPQPEPLL…VHPDQHVYLA (106 aa)) constitute a propeptide that is removed on maturation. Residues 36–122 (QYIVTLKEGL…VHPDQHVYLA (87 aa)) form the Inhibitor I9 domain. The 291-residue stretch at 131–421 (RWGLGYMSSK…ERKFTLPKYF (291 aa)) folds into the Peptidase S8 domain. Active-site charge relay system residues include D169 and H201. N-linked (GlcNAc...) asparagine glycans are attached at residues N248, N261, and N348. S357 functions as the Charge relay system in the catalytic mechanism. The N-linked (GlcNAc...) asparagine glycan is linked to N388.

The protein belongs to the peptidase S8 family.

It is found in the secreted. In terms of biological role, secreted subtilisin-like serine protease with keratinolytic activity that contributes to pathogenicity. The sequence is that of Subtilisin-like protease 2 (SUB2) from Trichophyton equinum (Horse ringworm fungus).